Consider the following 155-residue polypeptide: Arginine repressor (155 aa).

The protein belongs to the ArgR family.

It localises to the cytoplasm. Its pathway is amino-acid biosynthesis; L-arginine biosynthesis [regulation]. In terms of biological role, regulates arginine biosynthesis genes. The chain is Arginine repressor from Histophilus somni (strain 2336) (Haemophilus somnus).